The following is a 217-amino-acid chain: Redox-sensing transcriptional repressor Rex (217 aa).

Positions 18 to 57 (LYYRFLKNLHASGKQRVSSAELSDAVKVDSATIRRDFSYF) form a DNA-binding region, H-T-H motif. 92–97 (GVGNLG) is an NAD(+) binding site.

It belongs to the transcriptional regulatory Rex family. In terms of assembly, homodimer.

It is found in the cytoplasm. Modulates transcription in response to changes in cellular NADH/NAD(+) redox state. This Bacillus pumilus (strain SAFR-032) protein is Redox-sensing transcriptional repressor Rex.